The sequence spans 496 residues: Transactivator/viroplasmin protein (496 aa).

The segment at 102–128 (RPNQGIQIPKKNEDHSSSSSKEEKGIQ) is disordered. Residues 111–128 (KKNEDHSSSSSKEEKGIQ) are compositionally biased toward basic and acidic residues.

Belongs to the caulimoviridae viroplasmin family.

The protein localises to the host cytoplasm. In terms of biological role, enhances the translation of downstream ORFs on polycistronic mRNAs derived from carnation etched ring virus. The protein is Transactivator/viroplasmin protein of Dianthus caryophyllus (Carnation).